We begin with the raw amino-acid sequence, 926 residues long: Ubiquitin carboxyl-terminal hydrolase 4 (926 aa).

The Rhodanese domain occupies 205–328 (SQMEILLIDI…WLKSNYGRQV (124 aa)). S443 is modified (phosphoserine). The region spanning 562 to 923 (VGLENLGNSC…NAYVLFYHRV (362 aa)) is the USP domain. The Nucleophile role is filled by C571. The active-site Proton acceptor is the H880.

Belongs to the peptidase C19 family. In terms of assembly, interacts with BRO1, RFU1 and VPS32. Associates with the 26S proteasome.

It localises to the cytoplasm. The protein resides in the late endosome membrane. The enzyme catalyses Thiol-dependent hydrolysis of ester, thioester, amide, peptide and isopeptide bonds formed by the C-terminal Gly of ubiquitin (a 76-residue protein attached to proteins as an intracellular targeting signal).. RFU1 is an inhibitor of deubiquitination activity. In terms of biological role, ubiquitin thioesterase that acts at the late endosome/prevacuolar compartment to recover ubiquitin from ubiquitinated membrane proteins en route to the vacuole. Also removes ubiquitin from soluble proteins targeted to proteasomes. Is essential to maintain a normal level of free ubiquitin. Involved in the ammonium-induced down-regulation of the GAP1 permease and the UME3 destruction in response to oxidative stress. Has a role in the RAD9 checkpoint response to TOP1 poisons. Required for promoting coordination of DNA replication and avoids DNA overreplication. The sequence is that of Ubiquitin carboxyl-terminal hydrolase 4 (DOA4) from Saccharomyces cerevisiae (strain ATCC 204508 / S288c) (Baker's yeast).